The chain runs to 1553 residues: DNA topoisomerase 2-alpha (1553 aa).

The interval 1–25 (MELLDSPAPLRPLHDNPRLPKADGA) is disordered. The span at 12–25 (PLHDNPRLPKADGA) shows a compositional bias: basic and acidic residues. Residues Asn92, Asn121, 149 to 151 (SSN), and 162 to 169 (GRNGYGAK) contribute to the ATP site. Residues 343 to 345 (KKK) are interaction with DNA. 377-379 (QTK) serves as a coordination point for ATP. Positions 456–573 (CTLILTEGDS…SLLRHNFLEE (118 aa)) constitute a Toprim domain. Positions 462, 542, and 544 each coordinate Mg(2+). In terms of domain architecture, Topo IIA-type catalytic spans 716-1163 (IPSLVDGLKP…SPSDLWKEDL (448 aa)). The active-site O-(5'-phospho-DNA)-tyrosine intermediate is the Tyr806. Residues 991-1000 (KLQTNLTCNS) form an interaction with DNA region. Disordered regions lie at residues 1095–1114 (QNKE…AATG) and 1186–1553 (TGKP…DDMF). Positions 1098-1107 (EEEEGDESGE) are enriched in acidic residues. Basic and acidic residues predominate over residues 1242–1262 (SEKNESDEKQEGNSSGDKEPS). Acidic residues-rich tracts occupy residues 1300–1310 (SESDSESDDFE) and 1334–1349 (SDAD…EYQE). The span at 1371–1385 (VPKEKKGKAPKEKPL) shows a compositional bias: basic and acidic residues. Residues 1413-1432 (PRAQAVPKKPAAAKKGSTAK) are compositionally biased toward low complexity. Positions 1444–1454 (KKKAAPKAPRR) are enriched in basic residues. Residues 1517-1532 (SIDLTADSPAAAAPRT) are compositionally biased toward low complexity.

This sequence belongs to the type II topoisomerase family. In terms of assembly, homodimer. Mg(2+) is required as a cofactor. It depends on Mn(2+) as a cofactor. Requires Ca(2+) as cofactor.

It is found in the cytoplasm. It localises to the nucleus. The protein localises to the nucleoplasm. The protein resides in the nucleolus. It carries out the reaction ATP-dependent breakage, passage and rejoining of double-stranded DNA.. Its function is as follows. Key decatenating enzyme that alters DNA topology by binding to two double-stranded DNA molecules, generating a double-stranded break in one of the strands, passing the intact strand through the broken strand, and religating the broken strand. May play a role in the regulation of circadian rhythm. In Gallus gallus (Chicken), this protein is DNA topoisomerase 2-alpha (TOP2A).